A 140-amino-acid chain; its full sequence is Small ribosomal subunit protein uS12 (140 aa).

Asp102 bears the 3-methylthioaspartic acid mark.

The protein belongs to the universal ribosomal protein uS12 family. Part of the 30S ribosomal subunit. Contacts proteins S8 and S17. May interact with IF1 in the 30S initiation complex.

Functionally, with S4 and S5 plays an important role in translational accuracy. In terms of biological role, interacts with and stabilizes bases of the 16S rRNA that are involved in tRNA selection in the A site and with the mRNA backbone. Located at the interface of the 30S and 50S subunits, it traverses the body of the 30S subunit contacting proteins on the other side and probably holding the rRNA structure together. The combined cluster of proteins S8, S12 and S17 appears to hold together the shoulder and platform of the 30S subunit. The sequence is that of Small ribosomal subunit protein uS12 from Bacillus cytotoxicus (strain DSM 22905 / CIP 110041 / 391-98 / NVH 391-98).